A 445-amino-acid chain; its full sequence is Methylenetetrahydrofolate--tRNA-(uracil-5-)-methyltransferase TrmFO (445 aa).

Residue 10–15 (GGGLAG) coordinates FAD.

This sequence belongs to the MnmG family. TrmFO subfamily. FAD is required as a cofactor.

It localises to the cytoplasm. It catalyses the reaction uridine(54) in tRNA + (6R)-5,10-methylene-5,6,7,8-tetrahydrofolate + NADH + H(+) = 5-methyluridine(54) in tRNA + (6S)-5,6,7,8-tetrahydrofolate + NAD(+). It carries out the reaction uridine(54) in tRNA + (6R)-5,10-methylene-5,6,7,8-tetrahydrofolate + NADPH + H(+) = 5-methyluridine(54) in tRNA + (6S)-5,6,7,8-tetrahydrofolate + NADP(+). In terms of biological role, catalyzes the folate-dependent formation of 5-methyl-uridine at position 54 (M-5-U54) in all tRNAs. The sequence is that of Methylenetetrahydrofolate--tRNA-(uracil-5-)-methyltransferase TrmFO from Microcystis aeruginosa (strain NIES-843 / IAM M-2473).